Here is a 208-residue protein sequence, read N- to C-terminus: N-(5'-phosphoribosyl)anthranilate isomerase (208 aa).

This sequence belongs to the TrpF family.

It catalyses the reaction N-(5-phospho-beta-D-ribosyl)anthranilate = 1-(2-carboxyphenylamino)-1-deoxy-D-ribulose 5-phosphate. It functions in the pathway amino-acid biosynthesis; L-tryptophan biosynthesis; L-tryptophan from chorismate: step 3/5. The polypeptide is N-(5'-phosphoribosyl)anthranilate isomerase (Staphylococcus haemolyticus (strain JCSC1435)).